Reading from the N-terminus, the 697-residue chain is Disintegrin and metalloproteinase domain-containing protein 26A (697 aa).

The first 22 residues, 1 to 22, serve as a signal peptide directing secretion; sequence MFLKFCLWTMFFFSAWSPIGHA. A propeptide spanning residues 23 to 187 is cleaved from the precursor; it reads KYSSLLEVVT…NAPTLLQIPY (165 aa). N-linked (GlcNAc...) asparagine glycosylation is present at Asn-127. The Cysteine switch signature appears at 159-166; sequence MRCGLSEE. Cys-161 serves as a coordination point for Zn(2+). The Extracellular segment spans residues 188–671; it reads ENWWTHHRFI…PPLPLSHSKW (484 aa). The Peptidase M12B domain occupies 195–385; sequence RFIEYFVVLD…TKRSCLYDIP (191 aa). The N-linked (GlcNAc...) asparagine glycan is linked to Asn-214. 3 disulfide bridges follow: Cys-305-Cys-380, Cys-344-Cys-366, and Cys-346-Cys-351. Position 329 (His-329) interacts with Zn(2+). The active site involves Glu-330. The Zn(2+) site is built by His-333 and His-339. Asn-365, Asn-391, Asn-464, Asn-506, Asn-531, and Asn-573 each carry an N-linked (GlcNAc...) asparagine glycan. Residues 392–478 enclose the Disintegrin domain; the sequence is LTVCGNKVVE…ECPGDVYKAD (87 aa). Cys-450 and Cys-470 are oxidised to a cystine. One can recognise an EGF-like domain in the interval 616 to 649; sequence LVSNCSPQLYHMQGICNNKQHCHCGVTWKPPDCQ. 2 disulfides stabilise this stretch: Cys-620–Cys-631 and Cys-639–Cys-648. The chain crosses the membrane as a helical span at residues 672 to 692; sequence IVYILIVLDVCIVIIIYLFSF. Residues 693–697 are Cytoplasmic-facing; the sequence is YKLSK.

It depends on Zn(2+) as a cofactor. As to expression, expressed in sperm (at protein level). Expressed specifically in testis.

Its subcellular location is the membrane. Its function is as follows. Sperm surface membrane protein that may be involved in spermatogenesis and fertilization. The chain is Disintegrin and metalloproteinase domain-containing protein 26A from Mus musculus (Mouse).